Reading from the N-terminus, the 546-residue chain is MFRLSTTPRFTRCFQGRRQRISIAQIPPVQFISYSSSAAQSLSILPNSAFRSLRVCGARFQRFERSQLGLEYCVPRRQIHYYSMGLDKKVAMDKILEGKYPAKEHARKVVEYLRSKEPEAEGVLYLEAQKTVMIEDNDEAAPFRQRRYFYYLTGCDLPDSYFTYNISTGKSTLFIPPIDPESVIWTGLPLSPEEALALYDVDEVLTTDMINAHLALPNQSKVWAIAPQISTHITFLEFPQKDFTLLKEAIEEARVRKSEYEVALIRKANEISTVGHTAVLKAVKHVKNERDLEALFIKESIANGAREQAYHSIVASGTAAATLHYMKNSEGLDGKLNLLLDAGGEYKCYASDITRTFPINGKFTPESRSIYDIVLSMQSQCTSMLKAGVSWDEVHLLAHKIAIEGLLSLNILKGDKDEILKARTSVAFFPHGLGHYLGMDTHDTGGHPNYEDKDRLFRYLRVRGTLPEGSVVTVEPGIYFCRFIIEPYLKDPAHAQYINADILEKYWEVGGVRIEDNILITKDGYDNLTTSIKDVDEMEKIINSVY.

Asp-341, Asp-352, Glu-475, and Glu-515 together coordinate Mn(2+).

Belongs to the peptidase M24B family. It depends on Mn(2+) as a cofactor.

It catalyses the reaction Release of any N-terminal amino acid, including proline, that is linked to proline, even from a dipeptide or tripeptide.. Its function is as follows. Catalyzes the removal of a penultimate prolyl residue from the N-termini of peptides. The sequence is that of Probable Xaa-Pro aminopeptidase pepP (pepP) from Sclerotinia sclerotiorum (strain ATCC 18683 / 1980 / Ss-1) (White mold).